The sequence spans 142 residues: Large ribosomal subunit protein uL13 (142 aa).

It belongs to the universal ribosomal protein uL13 family. In terms of assembly, part of the 50S ribosomal subunit.

In terms of biological role, this protein is one of the early assembly proteins of the 50S ribosomal subunit, although it is not seen to bind rRNA by itself. It is important during the early stages of 50S assembly. The protein is Large ribosomal subunit protein uL13 of Syntrophobacter fumaroxidans (strain DSM 10017 / MPOB).